Reading from the N-terminus, the 278-residue chain is NADPH-dependent 7-cyano-7-deazaguanine reductase (278 aa).

87 to 89 lines the substrate pocket; sequence IES. NADPH is bound at residue 89–90; the sequence is SK. C185 (thioimide intermediate) is an active-site residue. D192 serves as the catalytic Proton donor. Residue 224-225 coordinates substrate; it reads HE. 253–254 contacts NADPH; it reads RG. A disordered region spans residues 255–278; it reads GLDINPYRSTNPTFSVQNHRSFRQ. Positions 261 to 278 are enriched in polar residues; sequence YRSTNPTFSVQNHRSFRQ.

This sequence belongs to the GTP cyclohydrolase I family. QueF type 2 subfamily. Homodimer.

Its subcellular location is the cytoplasm. The catalysed reaction is 7-aminomethyl-7-carbaguanine + 2 NADP(+) = 7-cyano-7-deazaguanine + 2 NADPH + 3 H(+). It participates in tRNA modification; tRNA-queuosine biosynthesis. Catalyzes the NADPH-dependent reduction of 7-cyano-7-deazaguanine (preQ0) to 7-aminomethyl-7-deazaguanine (preQ1). This chain is NADPH-dependent 7-cyano-7-deazaguanine reductase, found in Coxiella burnetii (strain CbuG_Q212) (Coxiella burnetii (strain Q212)).